Reading from the N-terminus, the 57-residue chain is Stress response protein (57 aa).

A Nuclear localization signal motif is present at residues 6 to 10 (RKERR).

In terms of tissue distribution, mesophyll protoplasts.

The protein resides in the nucleus. In terms of biological role, stress response. May play a role in the reentering of protoplasts into the cell cycle. The polypeptide is Stress response protein (Nicotiana sylvestris (Wood tobacco)).